Here is a 308-residue protein sequence, read N- to C-terminus: Putative ankyrin repeat protein R835 (308 aa).

ANK repeat units follow at residues D100 to L129, P152 to F181, S190 to Y217, K218 to K247, G249 to Y277, and Y279 to I305.

This is Putative ankyrin repeat protein R835 from Acanthamoeba polyphaga (Amoeba).